We begin with the raw amino-acid sequence, 138 residues long: MAPKAAEKKPAGKKPAEKAPAEKLPKAEKKITKEGGSEKKKKKSKKNIETYKIYIFKVLKQVHPDIGISGKAMGIMNSFINDIFEKLAQESSRLARYNKKPTITSREIQTAVRLVLPGELSKHAVSEGTKAVTKFTSS.

The segment covering 1-38 (MAPKAAEKKPAGKKPAEKAPAEKLPKAEKKITKEGGSE) has biased composition (basic and acidic residues). The segment at 1-45 (MAPKAAEKKPAGKKPAEKAPAEKLPKAEKKITKEGGSEKKKKKSK) is disordered. Ala2 is subject to N,N,N-trimethylalanine; alternate. Residue Ala2 is modified to N,N-dimethylalanine; alternate. Ala2 carries the N-methylalanine; alternate modification. The residue at position 4 (Lys4) is an N6-methyllysine. N6-acetyllysine is present on residues Lys8 and Lys13. Residue Lys14 is modified to N6,N6-dimethyllysine. Residues Lys18, Lys23, Lys29, and Lys30 each carry the N6-acetyllysine modification. A Glycyl lysine isopeptide (Lys-Gly) (interchain with G-Cter in ubiquitin) cross-link involves residue Lys134.

This sequence belongs to the histone H2B family. In terms of assembly, the nucleosome is a histone octamer containing two molecules each of H2A, H2B, H3 and H4 assembled in one H3-H4 heterotetramer and two H2A-H2B heterodimers. The octamer wraps approximately 147 bp of DNA. Can be acetylated to form H2BK6ac, H2BK33ac and H2BK34ac. Post-translationally, monoubiquitinated by BRE1 to form H2BK143ub1 and deubiquitinated by UBP26. Required for heterochromatic histone H3 di- and trimethylation at H3K4me. May give a specific tag for epigenetic transcriptional activation.

It is found in the nucleus. The protein localises to the chromosome. Its function is as follows. Core component of nucleosome. Nucleosomes wrap and compact DNA into chromatin, limiting DNA accessibility to the cellular machineries which require DNA as a template. Histones thereby play a central role in transcription regulation, DNA repair, DNA replication and chromosomal stability. DNA accessibility is regulated via a complex set of post-translational modifications of histones, also called histone code, and nucleosome remodeling. This is Histone H2B.8 from Arabidopsis thaliana (Mouse-ear cress).